Consider the following 116-residue polypeptide: Large ribosomal subunit protein bL20 (116 aa).

Belongs to the bacterial ribosomal protein bL20 family.

In terms of biological role, binds directly to 23S ribosomal RNA and is necessary for the in vitro assembly process of the 50S ribosomal subunit. It is not involved in the protein synthesizing functions of that subunit. This Synechococcus elongatus (strain ATCC 33912 / PCC 7942 / FACHB-805) (Anacystis nidulans R2) protein is Large ribosomal subunit protein bL20.